Reading from the N-terminus, the 61-residue chain is Photosystem II reaction center protein K (61 aa).

Positions Met1–Gly24 are excised as a propeptide. Residues Ile36–Ala56 traverse the membrane as a helical segment.

It belongs to the PsbK family. In terms of assembly, PSII is composed of 1 copy each of membrane proteins PsbA, PsbB, PsbC, PsbD, PsbE, PsbF, PsbH, PsbI, PsbJ, PsbK, PsbL, PsbM, PsbT, PsbX, PsbY, PsbZ, Psb30/Ycf12, at least 3 peripheral proteins of the oxygen-evolving complex and a large number of cofactors. It forms dimeric complexes.

The protein resides in the plastid. Its subcellular location is the chloroplast thylakoid membrane. Its function is as follows. One of the components of the core complex of photosystem II (PSII). PSII is a light-driven water:plastoquinone oxidoreductase that uses light energy to abstract electrons from H(2)O, generating O(2) and a proton gradient subsequently used for ATP formation. It consists of a core antenna complex that captures photons, and an electron transfer chain that converts photonic excitation into a charge separation. This Nicotiana tomentosiformis (Tobacco) protein is Photosystem II reaction center protein K.